Consider the following 149-residue polypeptide: Transcriptional regulator MraZ (149 aa).

SpoVT-AbrB domains are found at residues 7-54 (KYVN…GISH) and 83-126 (ALQL…QPQN).

It belongs to the MraZ family. Forms oligomers.

The protein localises to the cytoplasm. Its subcellular location is the nucleoid. The polypeptide is Transcriptional regulator MraZ (Rickettsia canadensis (strain McKiel)).